A 271-amino-acid polypeptide reads, in one-letter code: RxLR effector protein PITG_15679 (271 aa).

The signal sequence occupies residues 1–18 (MKVLQLIALTALVSSCVA). The RxLR-dEER signature appears at 49-69 (RSLRRYDLEGLDSVNSNREER). The region spanning 212-271 (RLLSANVVMRLNDKGEKQILLISSSNPKKGDFLLPKGGWDKGEDVKKAALREVIEEGGVR) is the Nudix hydrolase domain. A Nudix box motif is present at residues 248 to 269 (GGWDKGEDVKKAALREVIEEGG).

The protein in the N-terminal section; belongs to the RxLR effector family. It in the C-terminal section; belongs to the Nudix hydrolase family.

It is found in the secreted. The protein resides in the host cytoplasm. Its subcellular location is the host nucleus. In terms of biological role, effector that enhances P.infestans colonization of Nicotiana benthamiana leaves. In Phytophthora infestans (strain T30-4) (Potato late blight agent), this protein is RxLR effector protein PITG_15679.